The primary structure comprises 122 residues: Large ribosomal subunit protein uL14 (122 aa).

This sequence belongs to the universal ribosomal protein uL14 family. As to quaternary structure, part of the 50S ribosomal subunit. Forms a cluster with proteins L3 and L19. In the 70S ribosome, L14 and L19 interact and together make contacts with the 16S rRNA in bridges B5 and B8.

Functionally, binds to 23S rRNA. Forms part of two intersubunit bridges in the 70S ribosome. The protein is Large ribosomal subunit protein uL14 of Mycoplasma capricolum subsp. capricolum (strain California kid / ATCC 27343 / NCTC 10154).